Here is a 352-residue protein sequence, read N- to C-terminus: S-adenosylmethionine:tRNA ribosyltransferase-isomerase (352 aa).

This sequence belongs to the QueA family. In terms of assembly, monomer.

It is found in the cytoplasm. It catalyses the reaction 7-aminomethyl-7-carbaguanosine(34) in tRNA + S-adenosyl-L-methionine = epoxyqueuosine(34) in tRNA + adenine + L-methionine + 2 H(+). It functions in the pathway tRNA modification; tRNA-queuosine biosynthesis. Functionally, transfers and isomerizes the ribose moiety from AdoMet to the 7-aminomethyl group of 7-deazaguanine (preQ1-tRNA) to give epoxyqueuosine (oQ-tRNA). This chain is S-adenosylmethionine:tRNA ribosyltransferase-isomerase, found in Cupriavidus necator (strain ATCC 17699 / DSM 428 / KCTC 22496 / NCIMB 10442 / H16 / Stanier 337) (Ralstonia eutropha).